A 258-amino-acid polypeptide reads, in one-letter code: Acyl-[acyl-carrier-protein]--UDP-N-acetylglucosamine O-acyltransferase (258 aa).

It belongs to the transferase hexapeptide repeat family. LpxA subfamily. Homotrimer.

The protein localises to the cytoplasm. The catalysed reaction is a (3R)-hydroxyacyl-[ACP] + UDP-N-acetyl-alpha-D-glucosamine = a UDP-3-O-[(3R)-3-hydroxyacyl]-N-acetyl-alpha-D-glucosamine + holo-[ACP]. It participates in glycolipid biosynthesis; lipid IV(A) biosynthesis; lipid IV(A) from (3R)-3-hydroxytetradecanoyl-[acyl-carrier-protein] and UDP-N-acetyl-alpha-D-glucosamine: step 1/6. In terms of biological role, involved in the biosynthesis of lipid A, a phosphorylated glycolipid that anchors the lipopolysaccharide to the outer membrane of the cell. This Pseudomonas putida (strain ATCC 47054 / DSM 6125 / CFBP 8728 / NCIMB 11950 / KT2440) protein is Acyl-[acyl-carrier-protein]--UDP-N-acetylglucosamine O-acyltransferase.